A 287-amino-acid polypeptide reads, in one-letter code: Elongation factor Ts (287 aa).

An involved in Mg(2+) ion dislocation from EF-Tu region spans residues 80–83 (TDFL).

The protein belongs to the EF-Ts family.

Its subcellular location is the cytoplasm. Functionally, associates with the EF-Tu.GDP complex and induces the exchange of GDP to GTP. It remains bound to the aminoacyl-tRNA.EF-Tu.GTP complex up to the GTP hydrolysis stage on the ribosome. This Pseudomonas entomophila (strain L48) protein is Elongation factor Ts.